Here is a 618-residue protein sequence, read N- to C-terminus: uncharacterized protein (618 aa).

To Rhizobium NGR234A y4qD.

This is an uncharacterized protein from Sinorhizobium fredii (strain NBRC 101917 / NGR234).